Here is a 424-residue protein sequence, read N- to C-terminus: PtdIns3K complex I subunit atg38 (424 aa).

The stretch at 50 to 78 (LIKRCANNQIEELMVRIRELRESLPNKQT) forms a coiled coil. The interval 73-212 (LPNKQTPISM…DPAYQNTNEQ (140 aa)) is required for interaction with atg8. Residues 178–181 (FLIV) carry the AIM motif. Basic and acidic residues predominate over residues 268-284 (LSEEEMGRSHKREESFK). The interval 268 to 299 (LSEEEMGRSHKREESFKRAFGHASSSESSIGE) is disordered. Residues 390-420 (TVDSQLKIKQLETQIATLQKQLEQFQTSTLD) are a coiled coil.

Belongs to the ATG38 family. As to quaternary structure, component of the autophagy-specific vps34 PI3-kinase complex I composed of vps15, atg6, pik3/vps34, atg14 and atg38. Interacts (via AIM motif) with atg8; the interaction is direct and leads to recruitment of the autophagy-specific vps34 PI3-kinase complex I to the phagophore assembly site.

The protein resides in the preautophagosomal structure membrane. It is found in the cytoplasm. It localises to the cytosol. Functions as a part of the autophagy-specific VPS34 PI3-kinase complex I that plays a role in autophagosome assembly. This complex is essential to recruit the atg8-phosphatidylinositol conjugate and the atg12-atg5 conjugate to the pre-autophagosomal structure. By binding to atg8 at the phagophore assembly site, atg38 helps establish a positive feedback loop for recruitment of phagophore assembly proteins, including atg8. The protein is PtdIns3K complex I subunit atg38 of Schizosaccharomyces pombe (strain 972 / ATCC 24843) (Fission yeast).